Consider the following 150-residue polypeptide: Transcriptional repressor NrdR (150 aa).

The segment at C3 to C34 is a zinc-finger region. The region spanning L46–D136 is the ATP-cone domain.

The protein belongs to the NrdR family. The cofactor is Zn(2+).

In terms of biological role, negatively regulates transcription of bacterial ribonucleotide reductase nrd genes and operons by binding to NrdR-boxes. This is Transcriptional repressor NrdR from Corynebacterium kroppenstedtii (strain DSM 44385 / JCM 11950 / CIP 105744 / CCUG 35717).